A 351-amino-acid polypeptide reads, in one-letter code: Mitogen-activated protein kinase 2 (351 aa).

The Protein kinase domain occupies 16-304; the sequence is YEILDVIGEG…AEEALQHNYL (289 aa). Residues 22-30 and Lys45 contribute to the ATP site; that span reads IGEGAYGIV. Residue Asp140 is the Proton acceptor of the active site. Residue Thr176 is modified to Phosphothreonine. A TXY motif is present at residues 176 to 178; that stretch reads TEY. Phosphotyrosine is present on Tyr178.

This sequence belongs to the protein kinase superfamily. CMGC Ser/Thr protein kinase family. MAP kinase subfamily. Mg(2+) serves as cofactor. It depends on Mn(2+) as a cofactor. In terms of processing, dually phosphorylated on Thr-176 and Tyr-178, which activates the enzyme.

It localises to the nucleus. The enzyme catalyses L-seryl-[protein] + ATP = O-phospho-L-seryl-[protein] + ADP + H(+). It catalyses the reaction L-threonyl-[protein] + ATP = O-phospho-L-threonyl-[protein] + ADP + H(+). With respect to regulation, activated by tyrosine and threonine phosphorylation. Inhibited by the MEK inhibitor U0126 but not by the p38 inhibitor SB203580. Cobalt abolishes kinase activity, while calcium, copper and nickel have little effect on kinase activity. In terms of biological role, serine-threonine protein kinase which may be involved in pheromone signaling. Functionally complements the MAPK pheromone signaling pathway in S.cerevisiae. This chain is Mitogen-activated protein kinase 2, found in Pneumocystis carinii.